The following is a 746-amino-acid chain: Tudor domain-containing protein krimp (746 aa).

The involved in homooligomerization stretch occupies residues 1–310 (MNLEDISMIM…RDIYNQILKD (310 aa)). The segment at 311-489 (MAAFPENTIV…PAGITEDDMA (179 aa)) is non-canonical tudor domain. The C3H1-type zinc-finger motif lies at 511-540 (KDEQRICRHYDPKLNGCFKGNNCRFAHEPF). Positions 613-670 (KPRLLDIVLALYSDGCFYRAQIIDEFPSEYMIFYVDYGNTEFVPLSCLAPCENVDSFK) constitute a Tudor domain.

It belongs to the Tudor domain containing protein family. Homooligomerizes (via N-terminus). Component of the ping-pong piRNA processing (4P) complex consisting of krimp, aub and AGO3; a single molecule of krimp can bind both aub and AGO3 without the need for homooligomerization. Interacts (via canonical tudor domain) with aub (via N-terminus when symmetrically dimethylated on arginine residues). Interacts (via non-canonical tudor domain) with AGO3 (via N-terminus when unmethylated on arginine residues); this interaction leads to symmetrical dimethylation on AGO3 arginine residues and its subsequent dissociation from krimp. Krimp associated AGO3 is mostly free of piRNA binding and the interaction plays an important role in the loading of AGO3 with piRNAs; piRNA binding stimulates methylation of ACO3 by the csul/PRMT5 methylosome complex and promotes dissociation of the two proteins. As to expression, widely expressed in female germline cells, including differentiating germ cells in germarium and egg chambers (at protein level).

It is found in the cytoplasm. Its subcellular location is the perinuclear region. It localises to the cytoplasmic ribonucleoprotein granule. In terms of biological role, stable structural component of the perinuclear meiotic nuage, a germline-specific subcellular membraneless ribonucleoprotein compartment involved in production of transposable element-repressing Piwi-interacting RNA (piRNA)-induced silencing complexes (piRISCs), which are essential for maintaining germline integrity during oogenesis. Scaffold component of the ping-pong piRNA processing (4P) complex that recruits the Piwi proteins aub and AGO3 to specific subregions of the nuage where it coordinates their activity in the ping-pong amplification step of secondary piRNA biogenesis. Binds methylated aub, which is associated with piRNA, and unmethylated AGO3, which is not associated with piRNA, bringing the Piwi proteins into close proximity and facilitating the loading of freshly cut piRNAs generated by aub onto AGO3. Promotes asymmetric ping-pong amplification by aub and AGO3 to bias production towards antisense piRNAs capable of silencing transposable elements. Required for symmetrical dimethylation of AGO3, probably by recruitment to the nuage where methylosome components are located; dimethylation promotes AGO3 dissociation and interaction with other tudor-domain containing proteins such as tud. Required for the recruitment of mael to the perinuclear meiotic nuage. Required for the recruitment of aub to the nuage in testes but not in ovaries. Involved in repression of long interspersed nuclear elements (LINEs) including HeT-A, I-element LINEs and possibly mst40, but not TART LINEs. The chain is Tudor domain-containing protein krimp from Drosophila melanogaster (Fruit fly).